The sequence spans 304 residues: Aspartate carbamoyltransferase catalytic subunit (304 aa).

Residues R49 and T50 each coordinate carbamoyl phosphate. Position 77 (K77) interacts with L-aspartate. 3 residues coordinate carbamoyl phosphate: R99, H127, and Q130. Residues R160 and R211 each coordinate L-aspartate. A250 and P251 together coordinate carbamoyl phosphate.

The protein belongs to the aspartate/ornithine carbamoyltransferase superfamily. ATCase family. Heterododecamer (2C3:3R2) of six catalytic PyrB chains organized as two trimers (C3), and six regulatory PyrI chains organized as three dimers (R2).

It catalyses the reaction carbamoyl phosphate + L-aspartate = N-carbamoyl-L-aspartate + phosphate + H(+). The protein operates within pyrimidine metabolism; UMP biosynthesis via de novo pathway; (S)-dihydroorotate from bicarbonate: step 2/3. Catalyzes the condensation of carbamoyl phosphate and aspartate to form carbamoyl aspartate and inorganic phosphate, the committed step in the de novo pyrimidine nucleotide biosynthesis pathway. This is Aspartate carbamoyltransferase catalytic subunit from Bacillus velezensis (strain DSM 23117 / BGSC 10A6 / LMG 26770 / FZB42) (Bacillus amyloliquefaciens subsp. plantarum).